A 756-amino-acid polypeptide reads, in one-letter code: Hyperosmolality-gated Ca2+ permeable channel 1.5 (756 aa).

Helical transmembrane passes span 7–27 (IGVAATINILTAFAFFIAFAI), 101–121 (IYLLGLKIFFPIACIAFTVMV), 154–174 (SRFWVHLCMAYVITFWTCFVL), 373–393 (LVIAVAFFFLTFFFMIPIAFV), 425–445 (FLPGIALKIFLIVLPSILMLM), 465–485 (YYMFQFINVFLCSIIAGTALQ), 510–530 (ATFFITYIMVDGWAGVAGEIL), 574–594 (FILGLVYAAVSPILLPFILVF), 628–648 (VVIALIVSQLLLMGLLSTKKA), and 651–671 (STPLLFILPVLTIGFHKFCQG). The tract at residues 731–756 (PDKTPDLVATKRGSRRFNSGSAETFT) is disordered. Positions 746–756 (RFNSGSAETFT) are enriched in polar residues.

It belongs to the CSC1 (TC 1.A.17) family.

The protein localises to the membrane. In terms of biological role, acts as an osmosensitive calcium-permeable cation channel. The protein is Hyperosmolality-gated Ca2+ permeable channel 1.5 of Arabidopsis thaliana (Mouse-ear cress).